The sequence spans 446 residues: Baeyer-Villiger monooxygenase dmxR6 (446 aa).

This sequence belongs to the AflY oxidoreductase family.

Its pathway is secondary metabolite biosynthesis. Baeyer-Villiger monooxygenase; part of the gene cluster that mediates the biosynthesis of the dimeric xanthones cryptosporioptides. The pathway begins with the synthesis of atrochrysone thioester by the polyketide synthase dmx-nrPKS. The atrochrysone carboxyl ACP thioesterase dmxR1 then breaks the thioester bond and releases the atrochrysone carboxylic acid from dmx-nrPKS. Atrochrysone carboxylic acid is decarboxylated by the decarboxylase dmxR15, and oxidized by the anthrone oxygenase dmxR16 to yield emodin. Emodin is then reduced to emodin hydroquinone by the oxidoreductase dmxR7. A-ring reduction by the short chain dehydrogenase dmxR18, dehydration by the scytalone dehydratase-like protein dmxR17 and probable spontaneous re-oxidation, results in overall deoxygenation to chrysophanol. Baeyer-Villiger oxidation by the Baeyer-Villiger monooxygenase (BVMO) dmxR6 then yields monodictylactone in equilibrium with monodictyphenone. In the case of the cryptosporioptides biosynthesis, monodictylactone is reduced at C-12 to an alcohol (by the short chain dehydrogenases dmxR12 or dmxR8) and hydroxylated at C-5 by dmxR9, yielding the electron-rich aromatic which could eliminate H(2)O to form the ortho-quinonemethide, followed by tautomerisation to paraquinone and complete the formal reduction to produce the 10-methylgroup. Conjugate addition of C-4a-OH to the resulting paraquinone by the monooxygenase dmxR10 then gives cyclohexadienone, which is then reduced at C-5 by the short chain dehydrogenase dmxR3 to give the dihydroxanthone. The 6,7-epoxide in the cryptosporioptides could be introduced by the cytochrome P450 monooxygenase dmxL3. The highly reducing PKS dmxL2 manufactures butyrate, which is further carboxylated by dmxL1 to form ethylmalonate. It is not yet clear whether the carboxylation occurs while the butyrate is attached to the ACP of dmxL2, but this unusual fungal metabolite could then be esterified to O-5 by the O-acetyltransferase dmxR13. Finally, dimerization performed by dmxR5 gives the observed dimers cryptosporioptides A, B and C as the final products of the pathway. In Cryptosporiopsis sp. (strain 8999), this protein is Baeyer-Villiger monooxygenase dmxR6.